We begin with the raw amino-acid sequence, 92 residues long: Parbolysin P7 (92 aa).

Cystine bridges form between Cys-15–Cys-36, Cys-21–Cys-32, and Cys-46–Cys-59.

It belongs to the worm cytolysin family. As to expression, localized within the skin and proboscis and are most readily isolated from body mucus secretions.

It localises to the secreted. Functionally, cytolysin that shows hemolytic activity (on bovine erythrocytes, HC(50)=5.75 mg/ml). This hemolytic activity is completely inhibited by small unilamelar vesicles composed of PC/PG, PC/PI and PC/PS in 1:1 molar ratios (with at least 100 mg/ml concentration). In Parborlasia corrugatus (Antarctic nemertean worm), this protein is Parbolysin P7.